The following is a 417-amino-acid chain: Histidine--tRNA ligase (417 aa).

The protein belongs to the class-II aminoacyl-tRNA synthetase family.

Its subcellular location is the cytoplasm. The catalysed reaction is tRNA(His) + L-histidine + ATP = L-histidyl-tRNA(His) + AMP + diphosphate + H(+). The protein is Histidine--tRNA ligase of Pyrobaculum neutrophilum (strain DSM 2338 / JCM 9278 / NBRC 100436 / V24Sta) (Thermoproteus neutrophilus).